A 727-amino-acid polypeptide reads, in one-letter code: Zinc metalloproteinase nas-38 (727 aa).

The first 25 residues, 1-25 (MPSPSYNRHIIIASCFCCLLIFSSA), serve as a signal peptide directing secretion. The propeptide occupies 26-114 (ARVPKASKKH…FTQGKREKRK (89 aa)). Residues 113–312 (RKIGRNPLYK…QAINMAYGCT (200 aa)) enclose the Peptidase M12A domain. 2 disulfide bridges follow: C158-C311 and C179-C199. A Zn(2+)-binding site is contributed by H207. E208 is a catalytic residue. Zn(2+) contacts are provided by H211 and H217. The EGF-like domain occupies 306-345 (NMAYGCTESCADLPCLRNGYTHPNNCSMCACPEGLSGRYC). A glycan (N-linked (GlcNAc...) asparagine) is linked at N330. A CUB domain is found at 353 to 469 (AQCGGVIFAT…AGFKAKFWSN (117 aa)). Cystine bridges form between C355-C383 and C411-C432. Disordered stretches follow at residues 473–506 (PEGV…QSTT) and 532–561 (TPLT…TEPS). Low complexity predominate over residues 535 to 554 (TSSSTTTESTTVSSTTQSTT). In terms of domain architecture, TSP type-1 spans 610-658 (ECGCGAWSEWQGECSQQCGGCGHRLRKRECKKEACRKEEKRPCNFSACP). Intrachain disulfides connect C611-C644, C623-C652, C627-C657, and C639-C644. N-linked (GlcNAc...) asparagine glycosylation is found at N653 and N714.

Zn(2+) serves as cofactor. As to expression, expressed in the epidermis, the excretory canal cell, duct cell, pore cell, and excretory gland cell. Expressed in an oscillating pattern in epithelial cells with increased expression during the lethargus phase which occurs during molting between larval and adult stages. Not expressed in seam cells or in the RIS neuron.

It is found in the secreted. In terms of biological role, metalloprotease. As part of the innate immune response to molting and injury to the adult epidermis, positively regulates the activity of the transcription factor sta-2 to promote the expression of epidermal antimicrobial peptides such as nlp-29. Through regulating the expression of epidermal antimicrobial peptides such as nlp-29, modulates sleep duration and locomotion quiescence during the sleep-like state called lethargus which occurs during molting between larval and adult stages. This may occur through the sleep-active RIS neuron. The chain is Zinc metalloproteinase nas-38 from Caenorhabditis elegans.